The following is a 366-amino-acid chain: MSSPVSLENAASTSNKRVVAFHELPSPTDLIAANPLTPKQASKVEQDRQDIADIFAGDDDRLVVVVGPCSVHDPEAAIDYANRLAPLAKRLDQDLKIVMRVYFEKPRTIVGWKGLINDPHLNETYDIPEGLRIARKVLIDVVNLDLPVGCEFLEPNSPQYYADTVAWGAIGARTTESQVHRQLASGMSMPIGFKNGTDGNIQVAVDAVQAAQNPHFFFGTSDDGALSVVETAGNSNSHIILRGGTSGPNHDAASVEAVVEKLGENARLMIDASHANSGKDHIRQVEVVREIAEQISGGSEAVAGIMIESFLVGGAQNLDPAKLRINGGEGLVYGQSVTDKCIDIDTTIDLLAELAAAVRERRAAAK.

Belongs to the class-I DAHP synthase family.

The enzyme catalyses D-erythrose 4-phosphate + phosphoenolpyruvate + H2O = 7-phospho-2-dehydro-3-deoxy-D-arabino-heptonate + phosphate. It participates in metabolic intermediate biosynthesis; chorismate biosynthesis; chorismate from D-erythrose 4-phosphate and phosphoenolpyruvate: step 1/7. Stereospecific condensation of phosphoenolpyruvate (PEP) and D-erythrose-4-phosphate (E4P) giving rise to 3-deoxy-D-arabino-heptulosonate-7-phosphate (DAHP). The polypeptide is Phospho-2-dehydro-3-deoxyheptonate aldolase (aroG) (Corynebacterium glutamicum (strain ATCC 13032 / DSM 20300 / JCM 1318 / BCRC 11384 / CCUG 27702 / LMG 3730 / NBRC 12168 / NCIMB 10025 / NRRL B-2784 / 534)).